Consider the following 441-residue polypeptide: Plasmepsin VI (441 aa).

The Cytoplasmic segment spans residues M1 to K7. Residues S8–V28 form a helical; Signal-anchor for type II membrane protein membrane-spanning segment. The Extracellular portion of the chain corresponds to S29 to F441. Residues F109 to V435 enclose the Peptidase A1 domain. Active-site residues include D127 and D324.

Belongs to the peptidase A1 family.

It localises to the membrane. In terms of biological role, during the development in the mosquito midgut, plays a role in sporozoite egress from oocysts. This Plasmodium berghei (strain Anka) protein is Plasmepsin VI.